Here is a 151-residue protein sequence, read N- to C-terminus: MSRLIHLSFVLALLACLTGTISANPIDDDRDRLNQLLSNPEPADDAELLRNTQEAIALYKKHARRTLPGHQVELDLDRDIRAFETENLTVDGLPIQGGVWDLIKKGADKVPDEVKDQAKELAKTTAKALFNKLTEYLKKKISGEDAAKKDT.

The N-terminal stretch at 1-23 is a signal peptide; the sequence is MSRLIHLSFVLALLACLTGTISA.

This sequence belongs to the Turandot family.

It localises to the secreted. In terms of biological role, a humoral factor that may play a role in stress tolerance. The protein is Protein Turandot Z of Drosophila persimilis (Fruit fly).